We begin with the raw amino-acid sequence, 415 residues long: Calcium/calmodulin-dependent serine/threonine-protein kinase (415 aa).

Positions 12–308 constitute a Protein kinase domain; that stretch reads YEISEILGRG…AQELLDHPWV (297 aa). Residues 18 to 26 and Lys46 each bind ATP; that span reads LGRGGFSVV. Catalysis depends on Asp173, which acts as the Proton acceptor. The segment at 318 to 328 is calmodulin-binding; sequence MDAEIVSRLQS.

It belongs to the protein kinase superfamily. CAMK Ser/Thr protein kinase family. CaMK subfamily.

It catalyses the reaction L-seryl-[protein] + ATP = O-phospho-L-seryl-[protein] + ADP + H(+). The enzyme catalyses L-threonyl-[protein] + ATP = O-phospho-L-threonyl-[protein] + ADP + H(+). May be involved in signal transduction processes. This is Calcium/calmodulin-dependent serine/threonine-protein kinase from Malus domestica (Apple).